Consider the following 427-residue polypeptide: GTPase Obg (427 aa).

Residues 1–158 form the Obg domain; the sequence is MFVDIAKIYV…LWVILELKVL (158 aa). Residues 159–330 form the OBG-type G domain; sequence ADVGLIGYPN…VLKRAYELLK (172 aa). GTP contacts are provided by residues 165-172, 190-194, 212-215, 282-285, and 311-313; these read GYPNVGKS, FTTKY, DIPG, NKMD, and SAA. Mg(2+) is bound by residues Ser172 and Thr192. The OCT domain occupies 347–427; the sequence is FVYYKKKDVK…ILDVEFEYYE (81 aa).

Belongs to the TRAFAC class OBG-HflX-like GTPase superfamily. OBG GTPase family. Monomer. Mg(2+) is required as a cofactor.

It localises to the cytoplasm. Its function is as follows. An essential GTPase which binds GTP, GDP and possibly (p)ppGpp with moderate affinity, with high nucleotide exchange rates and a fairly low GTP hydrolysis rate. Plays a role in control of the cell cycle, stress response, ribosome biogenesis and in those bacteria that undergo differentiation, in morphogenesis control. The protein is GTPase Obg of Caldicellulosiruptor saccharolyticus (strain ATCC 43494 / DSM 8903 / Tp8T 6331).